The following is a 174-amino-acid chain: ATP-dependent protease subunit HslV (174 aa).

Thr-2 is an active-site residue. Gly-157, Cys-160, and Thr-163 together coordinate Na(+).

The protein belongs to the peptidase T1B family. HslV subfamily. As to quaternary structure, a double ring-shaped homohexamer of HslV is capped on each side by a ring-shaped HslU homohexamer. The assembly of the HslU/HslV complex is dependent on binding of ATP.

It is found in the cytoplasm. It carries out the reaction ATP-dependent cleavage of peptide bonds with broad specificity.. With respect to regulation, allosterically activated by HslU binding. Functionally, protease subunit of a proteasome-like degradation complex believed to be a general protein degrading machinery. The chain is ATP-dependent protease subunit HslV from Shewanella putrefaciens (strain CN-32 / ATCC BAA-453).